A 444-amino-acid chain; its full sequence is N-succinylarginine dihydrolase (444 aa).

Substrate-binding positions include 19 to 28, Asn110, and 137 to 138; these read AGLSFGNVAS and HR. Glu174 is a catalytic residue. Arg214 lines the substrate pocket. Residue His250 is part of the active site. Substrate is bound by residues Asp252 and Asn362. The active-site Nucleophile is Cys368.

It belongs to the succinylarginine dihydrolase family. As to quaternary structure, homodimer.

The catalysed reaction is N(2)-succinyl-L-arginine + 2 H2O + 2 H(+) = N(2)-succinyl-L-ornithine + 2 NH4(+) + CO2. It participates in amino-acid degradation; L-arginine degradation via AST pathway; L-glutamate and succinate from L-arginine: step 2/5. Catalyzes the hydrolysis of N(2)-succinylarginine into N(2)-succinylornithine, ammonia and CO(2). This Shewanella denitrificans (strain OS217 / ATCC BAA-1090 / DSM 15013) protein is N-succinylarginine dihydrolase.